The chain runs to 482 residues: G patch domain-containing protein 2-like (482 aa).

A phosphoserine mark is found at Ser-31, Ser-86, and Ser-88. The residue at position 91 (Thr-91) is a Phosphothreonine. Disordered regions lie at residues 195–222 and 408–482; these read SQPG…SECD and KRKR…TNGC. A compositionally biased stretch (basic and acidic residues) spans 198-215; the sequence is GRKERMECEAEEQKHGSD. Residues 414-427 are compositionally biased toward low complexity; the sequence is VASASFSSPSPVHP. Polar residues predominate over residues 468–482; it reads EKNSGCSSSPGTNGC.

The polypeptide is G patch domain-containing protein 2-like (Gpatch2l) (Mus musculus (Mouse)).